The chain runs to 95 residues: Co-chaperonin GroES (95 aa).

Belongs to the GroES chaperonin family. As to quaternary structure, heptamer of 7 subunits arranged in a ring. Interacts with the chaperonin GroEL.

It localises to the cytoplasm. Its function is as follows. Together with the chaperonin GroEL, plays an essential role in assisting protein folding. The GroEL-GroES system forms a nano-cage that allows encapsulation of the non-native substrate proteins and provides a physical environment optimized to promote and accelerate protein folding. GroES binds to the apical surface of the GroEL ring, thereby capping the opening of the GroEL channel. The chain is Co-chaperonin GroES from Clostridium botulinum (strain ATCC 19397 / Type A).